The following is a 582-amino-acid chain: Hemagglutinin-neuraminidase (582 aa).

The Intravirion segment spans residues 1-34 (MEPSKLFIMSDNATVAPGPVVNAAGKKTFRTCFR). A helical; Signal-anchor for type II membrane protein transmembrane segment spans residues 35-55 (ILVLSVQAVTLILVIVTLGEL). Topologically, residues 56-582 (IRMINDQGLS…LPVLARLTIT (527 aa)) are virion surface. Disulfide bonds link C178–C202, C192–C253, and C244–C257. The tract at residues 240–245 (NRKSCS) is involved in neuraminidase activity. N-linked (GlcNAc...) asparagine; by host glycans are attached at residues N284 and N329. Disulfide bonds link C350-C471, C382-C392, and C465-C475. N400 and N448 each carry an N-linked (GlcNAc...) asparagine; by host glycan. N507 carries an N-linked (GlcNAc...) asparagine; by host glycan. A disulfide bridge connects residues C545 and C556.

Belongs to the paramyxoviruses hemagglutinin-neuraminidase family. Homotetramer; composed of disulfide-linked homodimers. Interacts with F protein trimer.

It localises to the virion membrane. The protein localises to the host cell membrane. The catalysed reaction is Hydrolysis of alpha-(2-&gt;3)-, alpha-(2-&gt;6)-, alpha-(2-&gt;8)- glycosidic linkages of terminal sialic acid residues in oligosaccharides, glycoproteins, glycolipids, colominic acid and synthetic substrates.. In terms of biological role, attaches the virus to alpha-2,3-linked sialic acid-containing cell receptors and thereby initiating infection. Binding of HN protein to the receptor induces a conformational change that allows the F protein to trigger virion/cell membranes fusion. Binds to the glycan motifs sialyl Lewis (SLe) and GM2 ganglioside (GM2-glycan). Neuraminidase activity ensures the efficient spread of the virus by dissociating the mature virions from the neuraminic acid containing glycoproteins. This Homo sapiens (Human) protein is Hemagglutinin-neuraminidase (HN).